Reading from the N-terminus, the 1113-residue chain is Receptor-type guanylate cyclase gcy-18 (1113 aa).

The N-terminal stretch at 1–18 (MLKTLLFILIFFNIPIIA) is a signal peptide. Topologically, residues 19 to 499 (IEEIPDIKEN…RGQRCSYLLE (481 aa)) are extracellular. N-linked (GlcNAc...) asparagine glycosylation is found at Asn72, Asn369, and Asn456. A helical membrane pass occupies residues 500 to 520 (ISVGSLIILLILISVVFFFLF). At 521–1113 (RYCENKQLEK…TNYIQNVEGV (593 aa)) the chain is on the cytoplasmic side. Residues 543–848 (IDEEQVKSMM…RVRLNTEMVL (306 aa)) enclose the Protein kinase domain. The stretch at 853-884 (SLVDQMMKMMEQYANNLEKLVAERTGMLEEAN) forms a coiled coil. The 131-residue stretch at 918–1048 (TILFSDIVGF…DTVNVSSRME (131 aa)) folds into the Guanylate cyclase domain. Mg(2+)-binding residues include Asp923, Ile924, and Asp967.

Belongs to the adenylyl cyclase class-4/guanylyl cyclase family. Expressed specifically in AFD sensory neurons.

The protein localises to the cell membrane. It localises to the cell projection. Its subcellular location is the cilium. It catalyses the reaction GTP = 3',5'-cyclic GMP + diphosphate. Guanylate cyclase involved in the production of the second messenger cGMP. Regulates thermotaxis responses in AFD sensory neurons. May regulate AFD neuronal activity such as calcium responses to temperature gradients. This Caenorhabditis elegans protein is Receptor-type guanylate cyclase gcy-18.